The following is a 228-amino-acid chain: Phosphoribosylformylglycinamidine synthase subunit PurQ (228 aa).

In terms of domain architecture, Glutamine amidotransferase type-1 spans 3 to 226 (FAVVVFPGSN…VTYWRDAHVV (224 aa)). C86 functions as the Nucleophile in the catalytic mechanism. Residues H195 and E197 contribute to the active site.

Part of the FGAM synthase complex composed of 1 PurL, 1 PurQ and 2 PurS subunits.

It is found in the cytoplasm. The enzyme catalyses N(2)-formyl-N(1)-(5-phospho-beta-D-ribosyl)glycinamide + L-glutamine + ATP + H2O = 2-formamido-N(1)-(5-O-phospho-beta-D-ribosyl)acetamidine + L-glutamate + ADP + phosphate + H(+). The catalysed reaction is L-glutamine + H2O = L-glutamate + NH4(+). Its pathway is purine metabolism; IMP biosynthesis via de novo pathway; 5-amino-1-(5-phospho-D-ribosyl)imidazole from N(2)-formyl-N(1)-(5-phospho-D-ribosyl)glycinamide: step 1/2. In terms of biological role, part of the phosphoribosylformylglycinamidine synthase complex involved in the purines biosynthetic pathway. Catalyzes the ATP-dependent conversion of formylglycinamide ribonucleotide (FGAR) and glutamine to yield formylglycinamidine ribonucleotide (FGAM) and glutamate. The FGAM synthase complex is composed of three subunits. PurQ produces an ammonia molecule by converting glutamine to glutamate. PurL transfers the ammonia molecule to FGAR to form FGAM in an ATP-dependent manner. PurS interacts with PurQ and PurL and is thought to assist in the transfer of the ammonia molecule from PurQ to PurL. The protein is Phosphoribosylformylglycinamidine synthase subunit PurQ of Anoxybacillus flavithermus (strain DSM 21510 / WK1).